A 148-amino-acid chain; its full sequence is SsrA-binding protein (148 aa).

The disordered stretch occupies residues 128-148 (ESIAKKDQERNLKREFKNNNR).

This sequence belongs to the SmpB family.

It localises to the cytoplasm. Its function is as follows. Required for rescue of stalled ribosomes mediated by trans-translation. Binds to transfer-messenger RNA (tmRNA), required for stable association of tmRNA with ribosomes. tmRNA and SmpB together mimic tRNA shape, replacing the anticodon stem-loop with SmpB. tmRNA is encoded by the ssrA gene; the 2 termini fold to resemble tRNA(Ala) and it encodes a 'tag peptide', a short internal open reading frame. During trans-translation Ala-aminoacylated tmRNA acts like a tRNA, entering the A-site of stalled ribosomes, displacing the stalled mRNA. The ribosome then switches to translate the ORF on the tmRNA; the nascent peptide is terminated with the 'tag peptide' encoded by the tmRNA and targeted for degradation. The ribosome is freed to recommence translation, which seems to be the essential function of trans-translation. This Fusobacterium nucleatum subsp. nucleatum (strain ATCC 25586 / DSM 15643 / BCRC 10681 / CIP 101130 / JCM 8532 / KCTC 2640 / LMG 13131 / VPI 4355) protein is SsrA-binding protein.